We begin with the raw amino-acid sequence, 250 residues long: uncharacterized protein (250 aa).

A coiled-coil region spans residues 165–208 (HLNLETANTKATEYQKNYQEELKQRQELRQKLLQERTQKMLEAL). The segment covering 201-233 (TQKMLEALHQEETPEQDARDTAKKKTDQEEHTM) has biased composition (basic and acidic residues). The tract at residues 201-250 (TQKMLEALHQEETPEQDARDTAKKKTDQEEHTMRKANAPKTKASGEAPTP) is disordered.

This is an uncharacterized protein from Treponema pallidum (strain Nichols).